The sequence spans 733 residues: Ribosomal protein S6 kinase alpha-2 (733 aa).

One can recognise a Protein kinase 1 domain in the interval 59–318; it reads FELLKVLGQG…VEEIKRHPFF (260 aa). ATP contacts are provided by residues 65 to 73 and K91; that span reads LGQGSYGKV. D184 (proton acceptor) is an active-site residue. Residue S218 is modified to Phosphoserine; by PDPK1. Residues 319 to 388 enclose the AGC-kinase C-terminal domain; the sequence is VTIDWNKLYR…VASSLVQEPS (70 aa). Position 377 is a phosphoserine (S377). A Protein kinase 2 domain is found at 415 to 672; the sequence is YEIKEDIGVG…AVQVLKHPWI (258 aa). ATP contacts are provided by residues 421–429 and K444; that span reads IGVGSYSVC. Catalysis depends on D532, which acts as the Proton acceptor.

It belongs to the protein kinase superfamily. AGC Ser/Thr protein kinase family. S6 kinase subfamily. As to quaternary structure, forms a complex with either MAPK1/ERK2 or MAPK3/ERK1 in quiescent cells. Transiently dissociates following mitogenic stimulation. Interacts with FBXO5; cooperate to induce the metaphase arrest of early blastomeres; increases and stabilizes interaction of FBXO5 with CDC20. Mg(2+) serves as cofactor. Post-translationally, activated by phosphorylation at Ser-218 by PDPK1. Autophosphorylated on Ser-377, as part of the activation process. May be phosphorylated at Thr-356 and Ser-360 by MAPK1/ERK2 and MAPK3/ERK1. N-terminal myristoylation results in an activated kinase in the absence of added growth factors.

It localises to the nucleus. It is found in the cytoplasm. It catalyses the reaction L-seryl-[protein] + ATP = O-phospho-L-seryl-[protein] + ADP + H(+). The catalysed reaction is L-threonyl-[protein] + ATP = O-phospho-L-threonyl-[protein] + ADP + H(+). Upon extracellular signal or mitogen stimulation, phosphorylated at Thr-570 in the C-terminal kinase domain (CTKD) by MAPK1/ERK2 and MAPK3/ERK1. The activated CTKD then autophosphorylates Ser-377, allowing binding of PDPK1, which in turn phosphorylates Ser-218 in the N-terminal kinase domain (NTDK) leading to the full activation of the protein and subsequent phosphorylation of the substrates by the NTKD. Functionally, serine/threonine-protein kinase that acts downstream of ERK (MAPK1/ERK2 and MAPK3/ERK1) signaling and mediates mitogenic and stress-induced activation of transcription factors, regulates translation, and mediates cellular proliferation, survival, and differentiation. May function as tumor suppressor in epithelial ovarian cancer cells. The chain is Ribosomal protein S6 kinase alpha-2 (Rps6ka2) from Mus musculus (Mouse).